The sequence spans 831 residues: MSGWRKIYYKLLNLPLKLLVKSKVIPADPVSELGLDPSRPILYVLPYNSKADLLTLRAQCLAQDLPDPLIPLEIDGVQLPSHVFIENGPRVFRYYVPKQESVKLFHDYLDLHRNNPALDIQMLPVSVMFGRSPGREGHGTPHLRVLNGVQKFFAVLWLGRDSFVRFSTTVSLRRMASEHGTDKTIAHKLARVARMHFSRQRLAAVGPSLPARQDLFKKLLASKAIEKAVADEARSKKISHEKAQQNAITLMEEIAANFSYEAVRLSDRVLSWTWNRLYQGINVHNAERVRQLAQDGHEIVYVPCHRSHMDYLLLSYVLYHQGLVPPHIAAGINLNFWPAGPIFRRLGAFFIRRTFKGNKLYSTVFREYLGELFTRGYSVEYFVEGGRSRTGRLLEPKTGTLSMTIQAMLRGGTRPITLVPIYIGYEHVMEVGTYAKELRGAIKEKENLLQMLRGLRKLRNLGQGYVNFGEPLPLTTYLNTHVPQWRDAIDPIEAQRPSWLTPAVNDLANQIMVRINNAAAANAMNLCSTALLASRQRSLTREQLLEQLDCYLQLMRNAPYAKDTTVPDKTPEELLNHALNMNKFEVEKDTIGDIIILPREQAVLMTYYRNNIQHLLILPSLIASMVMYHRRITRTELLHKISMIYPMLKAELFLHYSKEQLPETLDTLIDELARQQLICDKGSELVLNPARIRPLQLLAAGVRETLQRYAITLSLLSATPSINRGALEKESRIMAQRLSVLHGINAPEFFDKAVFSTLVATLREEGYISDSGDAIQEHTLEVYNMLSALMTPEVKLTIESVSMPAETSNQPEAPETPETPETPEPEGKTES.

An HXXXXD motif motif is present at residues 304–309 (CHRSHM). The disordered stretch occupies residues 801–831 (VSMPAETSNQPEAPETPETPETPEPEGKTES).

It belongs to the GPAT/DAPAT family.

Its subcellular location is the cell inner membrane. The catalysed reaction is sn-glycerol 3-phosphate + an acyl-CoA = a 1-acyl-sn-glycero-3-phosphate + CoA. Its pathway is phospholipid metabolism; CDP-diacylglycerol biosynthesis; CDP-diacylglycerol from sn-glycerol 3-phosphate: step 1/3. The protein is Glycerol-3-phosphate acyltransferase of Yersinia pseudotuberculosis serotype IB (strain PB1/+).